Here is an 81-residue protein sequence, read N- to C-terminus: Control protein C.BamHI (81 aa).

The 56-residue stretch at valine 13–leucine 68 folds into the HTH cro/C1-type domain. Positions glutamine 25–arginine 44 form a DNA-binding region, H-T-H motif.

Functionally, may help modulate methylase (M) and restriction enzyme (R) expression as cells undergo physiological changes such as sporulation or transformation. This Bacillus amyloliquefaciens (Bacillus velezensis) protein is Control protein C.BamHI.